Here is a 474-residue protein sequence, read N- to C-terminus: Dol-P-Glc:Glc(2)Man(9)GlcNAc(2)-PP-Dol alpha-1,2-glucosyltransferase (474 aa).

At 1-6 (MAQLEG) the chain is on the cytoplasmic side. The chain crosses the membrane as a helical span at residues 7 to 27 (YYFSAALSCTFLVSCLLFSAF). Over 28–64 (SRALREPYMDEIFHLPQAQRYCEGRFSLSQWDPMITT) the chain is Extracellular. The helical transmembrane segment at 65–85 (LPGLYLVSVGVVKPASWLLGW) threads the bilayer. Residues 86 to 97 (SEHVICSIGVLR) are Cytoplasmic-facing. Residues 98–118 (FVNLLFSVGNFYLLYLLFRKV) form a helical membrane-spanning segment. At 119-126 (QPRNKASS) the chain is on the extracellular side. The helical transmembrane segment at 127–147 (SIQRILSTLTLAVFPTLYFFN) threads the bilayer. At 148-150 (FLY) the chain is on the cytoplasmic side. The helical transmembrane segment at 151 to 171 (YTEAGSVFFTLFAYLMCLYGN) threads the bilayer. Over 172–175 (HRTS) the chain is Extracellular. A helical membrane pass occupies residues 176 to 196 (ALLGFCGFMFRQTNIIWAAFC). At 197-256 (AGHLIAQKCSEAWKIELQKKKEERLAPTKGPLSELRRVLQFLLVYAMSLKNLRMLFLLTW) the chain is on the cytoplasmic side. Residues 257-277 (PYVLLLLAFFAFVVVNGGIVV) form a helical membrane-spanning segment. The Extracellular portion of the chain corresponds to 278–283 (GDRSSH). A helical transmembrane segment spans residues 284-304 (EACLHFPQLFYFFSFTAFFSF). The Cytoplasmic segment spans residues 305–317 (PHLLSLTKVKTFL). The helical transmembrane segment at 318–338 (SLVWKRRVQFSVVTLVSILLV) threads the bilayer. At 339–365 (WKFTYVHKYLLADNRHYTFYVWKRVFQ) the chain is on the extracellular side. Residues 366–386 (RHEVVKYLLVPAYIFAGWAIA) traverse the membrane as a helical segment. The Cytoplasmic segment spans residues 387–392 (DSLKAK). A helical membrane pass occupies residues 393-413 (SIFWNLMFFVCLVASTVPQKL). The Extracellular segment spans residues 414-436 (LEFRYFILPYIIYRLNIPLPPIS). The chain crosses the membrane as a helical span at residues 437-457 (RLVCELGCYTVVNFVTFYIFL). Over 458 to 473 (NKTFQWPNSQDIQRFM) the chain is Cytoplasmic.

It belongs to the ALG10 glucosyltransferase family. As to quaternary structure, interacts with KCNH1; may regulate KCNH1, possibly by regulating its N-glycosylation. Interacts with KCNH2; may reduce KCNH2 sensitivity to classic proarrhythmic drug blockade, possibly by regulating its N-glycosylation.

Its subcellular location is the endoplasmic reticulum membrane. It catalyses the reaction an alpha-D-Glc-(1-&gt;3)-alpha-D-Glc-(1-&gt;3)-alpha-D-Man-(1-&gt;2)-alpha-D-Man-(1-&gt;2)-alpha-D-Man-(1-&gt;3)-[alpha-D-Man-(1-&gt;2)-alpha-D-Man-(1-&gt;3)-[alpha-D-Man-(1-&gt;2)-alpha-D-Man-(1-&gt;6)]-alpha-D-Man-(1-&gt;6)]-beta-D-Man-(1-&gt;4)-beta-D-GlcNAc-(1-&gt;4)-alpha-D-GlcNAc-diphospho-di-trans,poly-cis-dolichol + a di-trans,poly-cis-dolichyl beta-D-glucosyl phosphate = a alpha-D-Glc-(1-&gt;2)-alpha-D-Glc-(1-&gt;3)-alpha-D-Glc-(1-&gt;3)-alpha-D-Man-(1-&gt;2)-alpha-D-Man-(1-&gt;2)-alpha-D-Man-(1-&gt;3)-[alpha-D-Man-(1-&gt;2)-alpha-D-Man-(1-&gt;3)-[alpha-D-Man-(1-&gt;2)-alpha-D-Man-(1-&gt;6)]-alpha-D-Man-(1-&gt;6)]-beta-D-Man-(1-&gt;4)-beta-D-GlcNAc-(1-&gt;4)-alpha-D-GlcNAc-diphospho-di-trans,poly-cis-dolichol + a di-trans,poly-cis-dolichyl phosphate + H(+). The protein operates within protein modification; protein glycosylation. Functionally, dol-P-Glc:Glc(2)Man(9)GlcNAc(2)-PP-Dol alpha-1,2-glucosyltransferase that operates in the biosynthetic pathway of dolichol-linked oligosaccharides, the glycan precursors employed in protein asparagine (N)-glycosylation. The assembly of dolichol-linked oligosaccharides begins on the cytosolic side of the endoplasmic reticulum membrane and finishes in its lumen. The sequential addition of sugars to dolichol pyrophosphate produces dolichol-linked oligosaccharides containing fourteen sugars, including two GlcNAcs, nine mannoses and three glucoses. Once assembled, the oligosaccharide is transferred from the lipid to nascent proteins by oligosaccharyltransferases. In the lumen of the endoplasmic reticulum, adds the third and last glucose residue from dolichyl phosphate glucose (Dol-P-Glc) onto the lipid-linked oligosaccharide intermediate Glc(2)Man(9)GlcNAc(2)-PP-Dol to produce Glc(3)Man(9)GlcNAc(2)-PP-Dol. This is Dol-P-Glc:Glc(2)Man(9)GlcNAc(2)-PP-Dol alpha-1,2-glucosyltransferase from Mus musculus (Mouse).